Here is a 596-residue protein sequence, read N- to C-terminus: Nuclear receptor subfamily 2 group C member 2 (596 aa).

Serine 19 bears the Phosphoserine; by MAPK mark. A Phosphoserine modification is found at serine 46. Phosphoserine; by MAPK is present on residues serine 55 and serine 68. Serine 98 is modified (phosphoserine). Positions 114–189 form a DNA-binding region, nuclear receptor; it reads VEYCVVCGDK…MGMKMESVQS (76 aa). 2 consecutive NR C4-type zinc fingers follow at residues 117–137 and 153–177; these read CVVC…CEGC and CRSS…LKKC. A Glycyl lysine isopeptide (Lys-Gly) (interchain with G-Cter in SUMO2) cross-link involves residue lysine 192. Serine 219 carries the phosphoserine modification. N6-acetyllysine is present on lysine 231. Residues 341 to 583 form the NR LBD domain; the sequence is GSIHVISRDQ…SIIPYILKME (243 aa).

It belongs to the nuclear hormone receptor family. NR2 subfamily. In terms of assembly, homodimer; can bind DNA as homodimer. Heterodimer; binds DNA as a heterodimer with NR2C1 required for chromatin remodeling and for binding to promoter regions such as globin DR1 repeats. Interacts with NR2C2AP; the interaction represses selective NR2C2-mediated transcriptional activity. Interacts with PCAF; the interaction preferentially occurs on the non-phosphorylated form and induces NR2C2-mediated transactivation activity and does not require the ligand-binding domain. Interacts (MAPK-mediated phosphorylated form) with NRIP1; the interaction promotes repression of NR2C2-mediated activity. Interacts with NLRP10. Interacts (via ligand-binding region) with transcriptional corepressor JAZF1; the interaction promotes NR2C2-mediated transcriptional repression. In terms of processing, phosphorylation on Ser-19 and Ser-68 is an important regulator of NR2C2-mediated transcriptional activity. Phosphorylation on these residues recruits the corepressor, NRIP1, leading to transcripional repression, whereas the non-phosphorylated form preferentially recruits the coactivator, PCAF. In terms of tissue distribution, expressed in hepatocytes. Also expressed in granule cells of the hippocampus and the cerebellum.

The protein resides in the nucleus. Functionally, orphan nuclear receptor that can act as a repressor or activator of transcription. An important repressor of nuclear receptor signaling pathways such as retinoic acid receptor, retinoid X, vitamin D3 receptor, thyroid hormone receptor and estrogen receptor pathways. May regulate gene expression during the late phase of spermatogenesis. Activates transcriptional activity of LHCG and is antagonist of PPARA-mediated transactivation. Together with NR2C1, forms the core of the DRED (direct repeat erythroid-definitive) complex that represses embryonic and fetal globin transcription including that of GATA1. Binds to hormone response elements (HREs) consisting of two 5'-AGGTCA-3' half site direct repeat consensus sequences. Plays a fundamental role in early embryonic development and embryonic stem cells. Required for normal spermatogenesis and cerebellum development. Appears to be important for neurodevelopmentally regulated behavior. The chain is Nuclear receptor subfamily 2 group C member 2 (Nr2c2) from Rattus norvegicus (Rat).